A 1002-amino-acid chain; its full sequence is Calcium-transporting ATPase sarcoplasmic/endoplasmic reticulum type (1002 aa).

The Cytoplasmic portion of the chain corresponds to 1-48 (MEDGHSKTVEQSLNFFGTDGERGLTLDQIKTNQAKYGPNELPTEEGKS). The helical transmembrane segment at 49-69 (IWQLVLEQFDDLLVKILLLAA) threads the bilayer. At 70 to 89 (IISFVLALFEEHEETFTAFV) the chain is on the lumenal side. The helical transmembrane segment at 90–110 (EPLVILLILIANAVVGVWQER) threads the bilayer. The Cytoplasmic segment spans residues 111-253 (NAESAIEALK…EIKTPLQQKL (143 aa)). A helical membrane pass occupies residues 254–273 (DEFGEQLSKVISVICVAVWA). Over 274 to 295 (INIGHFNDPAHGGSWIKGAIYY) the chain is Lumenal. A helical transmembrane segment spans residues 296 to 313 (FKIAVALAVAAIPEGLPA). The Ca(2+) site is built by valine 304, alanine 305, isoleucine 307, and glutamate 309. Over 314 to 757 (VITTCLALGT…EEGRAIYNNM (444 aa)) the chain is Cytoplasmic. Aspartate 351 functions as the 4-aspartylphosphate intermediate in the catalytic mechanism. Positions 703 and 707 each coordinate Mg(2+). Residues 758–777 (KQFIRYLISSNIGEVVSIFL) traverse the membrane as a helical segment. Positions 768 and 771 each coordinate Ca(2+). The Lumenal portion of the chain corresponds to 778–787 (TAALGLPEAL). A helical membrane pass occupies residues 788-808 (IPVQLLWVNLVTDGLPATALG). Positions 796, 799, and 800 each coordinate Ca(2+). Residues 809–828 (FNPPDLDIMDKPPRKADEGL) lie on the Cytoplasmic side of the membrane. Residues 829-851 (ISGWLFFRYMAIGFYVGAATVGA) traverse the membrane as a helical segment. At 852-897 (AAWWFIASSEGPGLTYWQLTHHLSCLGGGDEFKGVDCKIFSDPKAM) the chain is on the lumenal side. The helical transmembrane segment at 898–917 (TMALSVLVTIEMLNAMNSLS) threads the bilayer. Glutamate 908 contributes to the Ca(2+) binding site. Residues 918–930 (ENQSLISMPPWCN) are Cytoplasmic-facing. The helical transmembrane segment at 931-949 (LWLIGSMALSFTLHFVILY) threads the bilayer. The Lumenal segment spans residues 950 to 964 (VDVLSTVFQVTPLSA). Residues 965–985 (EEWITVMKFSIPVVLLDETLK) form a helical membrane-spanning segment. Over 986-1002 (FVARKIADVPDAVVDKW) the chain is Cytoplasmic.

Belongs to the cation transport ATPase (P-type) (TC 3.A.3) family.

The protein localises to the endoplasmic reticulum membrane. It localises to the sarcoplasmic reticulum membrane. The catalysed reaction is Ca(2+)(in) + ATP + H2O = Ca(2+)(out) + ADP + phosphate + H(+). Functionally, this magnesium-dependent enzyme catalyzes the hydrolysis of ATP coupled with the transport of calcium. The protein is Calcium-transporting ATPase sarcoplasmic/endoplasmic reticulum type of Drosophila pseudoobscura pseudoobscura (Fruit fly).